Here is a 145-residue protein sequence, read N- to C-terminus: Large ribosomal subunit protein cL37 (145 aa).

A chloroplast-targeting transit peptide spans 1–63 (MALLCFNSFT…PRKNSIFIAS (63 aa)). A disordered region spans residues 125–145 (KRRLRKKGNWPPSKMKKLEGV).

This sequence belongs to the chloroplast-specific ribosomal protein cL37 family. In terms of assembly, part of the 50S ribosomal subunit.

The protein resides in the plastid. It is found in the chloroplast. This chain is Large ribosomal subunit protein cL37 (PSRP5), found in Pisum sativum (Garden pea).